We begin with the raw amino-acid sequence, 234 residues long: Probable pectate lyase F (234 aa).

A signal peptide spans 1–17; the sequence is MRSTAAVLSILLPGALA. An N-linked (GlcNAc...) asparagine glycan is attached at asparagine 168.

Belongs to the polysaccharide lyase 3 family. Ca(2+) is required as a cofactor.

The protein resides in the secreted. It catalyses the reaction Eliminative cleavage of (1-&gt;4)-alpha-D-galacturonan to give oligosaccharides with 4-deoxy-alpha-D-galact-4-enuronosyl groups at their non-reducing ends.. Functionally, pectinolytic enzyme consist of four classes of enzymes: pectin lyase, polygalacturonase, pectin methylesterase and rhamnogalacturonase. Among pectinolytic enzymes, pectin lyase is the most important in depolymerization of pectin, since it cleaves internal glycosidic bonds of highly methylated pectins. Favors pectate, the anion, over pectin, the methyl ester. This Aspergillus terreus (strain NIH 2624 / FGSC A1156) protein is Probable pectate lyase F (plyF).